Here is a 336-residue protein sequence, read N- to C-terminus: Putative cysteine synthase (336 aa).

Lys41 is modified (N6-(pyridoxal phosphate)lysine). Pyridoxal 5'-phosphate-binding positions include Asn71, Gly179–Ser183, and Ser269.

This sequence belongs to the cysteine synthase/cystathionine beta-synthase family. The cofactor is pyridoxal 5'-phosphate.

It catalyses the reaction O-acetyl-L-serine + hydrogen sulfide = L-cysteine + acetate. As it is highly similar to bacterial and plant cysteine synthases, it is possible that it catalyzes a related reaction. This chain is Putative cysteine synthase, found in Sinorhizobium fredii (strain NBRC 101917 / NGR234).